Consider the following 158-residue polypeptide: NAD(P)H-quinone oxidoreductase subunit N (158 aa).

It belongs to the complex I NdhN subunit family. In terms of assembly, NDH-1 can be composed of about 15 different subunits; different subcomplexes with different compositions have been identified which probably have different functions.

The protein localises to the cellular thylakoid membrane. It carries out the reaction a plastoquinone + NADH + (n+1) H(+)(in) = a plastoquinol + NAD(+) + n H(+)(out). The catalysed reaction is a plastoquinone + NADPH + (n+1) H(+)(in) = a plastoquinol + NADP(+) + n H(+)(out). Its function is as follows. NDH-1 shuttles electrons from an unknown electron donor, via FMN and iron-sulfur (Fe-S) centers, to quinones in the respiratory and/or the photosynthetic chain. The immediate electron acceptor for the enzyme in this species is believed to be plastoquinone. Couples the redox reaction to proton translocation, and thus conserves the redox energy in a proton gradient. Cyanobacterial NDH-1 also plays a role in inorganic carbon-concentration. The protein is NAD(P)H-quinone oxidoreductase subunit N of Rippkaea orientalis (strain PCC 8801 / RF-1) (Cyanothece sp. (strain PCC 8801)).